The primary structure comprises 343 residues: D-beta-hydroxybutyrate dehydrogenase, mitochondrial (343 aa).

The transit peptide at 1 to 46 (MLAARLSRPLSQLPGKALSVCDRENGTRHTLLFYPASFSPDTRRTY) directs the protein to the mitochondrion. An NAD(+)-binding site is contributed by 59–83 (LVTGCDSGFGFSLAKHLHSKGFLVF). Lys-73 bears the N6-acetyllysine mark. Position 103 is an N6-acetyllysine; alternate (Lys-103). N6-succinyllysine; alternate is present on Lys-103. N6-acetyllysine occurs at positions 132 and 177. Ser-195 is a substrate binding site. Tyr-208 serves as the catalytic Proton acceptor. An N6-acetyllysine modification is found at Lys-212. Residue Ser-219 is glycosylated (O-linked (GlcNAc) serine). Ser-246 carries the post-translational modification Phosphoserine. An N6-acetyllysine modification is found at Lys-258. Residue Lys-259 is modified to N6-acetyllysine; alternate. Residue Lys-259 is modified to N6-succinyllysine; alternate. Residue Lys-280 is modified to N6-acetyllysine.

It belongs to the short-chain dehydrogenases/reductases (SDR) family. As to quaternary structure, homotetramer. In terms of tissue distribution, expressed in liver.

It is found in the mitochondrion inner membrane. It localises to the mitochondrion matrix. It carries out the reaction (R)-3-hydroxybutanoate + NAD(+) = acetoacetate + NADH + H(+). With respect to regulation, requires phosphatidylcholine as an allosteric activator for enzymatic activity. The chain is D-beta-hydroxybutyrate dehydrogenase, mitochondrial from Rattus norvegicus (Rat).